The chain runs to 352 residues: C-C chemokine receptor type 5 (352 aa).

Topologically, residues 1–30 (MDYQVSSPTYDIDYNTSEPCQKINVKQIAA) are extracellular. Tyr-3 is modified (sulfotyrosine). Ser-6 and Ser-7 each carry an O-linked (GalNAc...) serine glycan. Sulfotyrosine is present on residues Tyr-10 and Tyr-14. Intrachain disulfides connect Cys-20-Cys-269 and Cys-101-Cys-178. The helical transmembrane segment at 31 to 58 (RLLPLLYSLVFIFGFVGNILVVLILINC) threads the bilayer. The Cytoplasmic segment spans residues 59-68 (KRLKSMTDIY). The helical transmembrane segment at 69-89 (LLNLAISDLLFLLTVPFWAHY) threads the bilayer. Residues 90–102 (AAAQWDFGNTMCQ) are Extracellular-facing. A helical transmembrane segment spans residues 103 to 124 (LLTGLYFIGFFSGIFFIILLTI). The Cytoplasmic segment spans residues 125–141 (DRYLAIVHAVFALKART). Residues 142 to 166 (VTFGVVTSVITWVVAVFASLPRIIF) form a helical membrane-spanning segment. Residues 167–198 (TRSQREGLHYTCSSHFPYSQYQFWKNFQTLKI) are Extracellular-facing. Residues 199 to 218 (VILGLVLPLLVMVICYSGIL) form a helical membrane-spanning segment. The Cytoplasmic segment spans residues 219–235 (KTLLRCRNEKKRHRAVR). Residues 236 to 260 (LIFTIMIVYFLFWAPYNIVLLLNTF) traverse the membrane as a helical segment. Topologically, residues 261 to 277 (QEFFGLNNCSSSNRLDQ) are extracellular. Residues 278–301 (AMQVTETLGMTHCCINPIIYAFVG) traverse the membrane as a helical segment. At 302-352 (EKFRNYLLVFFQKHIAKRFCKCCSIFQQEAPERASSVYTRSTGEQEISVGL) the chain is on the cytoplasmic side. Residues Cys-321, Cys-323, and Cys-324 are each lipidated (S-palmitoyl cysteine). Phosphoserine; by BARK1 is present on residues Ser-336, Ser-337, Ser-342, and Ser-349.

The protein belongs to the G-protein coupled receptor 1 family. In terms of assembly, interacts with PRAF2. Efficient ligand binding to CCL3/MIP-1alpha and CCL4/MIP-1beta requires sulfation, O-glycosylation and sialic acid modifications. Glycosylation on Ser-6 is required for efficient binding of CCL4. Interacts with GRK2. Interacts with ARRB1 and ARRB2. Interacts with CNIH4. Interacts with S100A4; this interaction stimulates T-lymphocyte chemotaxis. In terms of processing, sulfated on at least 2 of the N-terminal tyrosines. Sulfation is required for efficient binding of the chemokines, CCL3 and CCL4. Post-translationally, palmitoylation in the C-terminal is important for cell surface expression. Phosphorylation on serine residues in the C-terminal is stimulated by binding CC chemokines especially by APO-RANTES. In terms of processing, O-glycosylated, but not N-glycosylated. Ser-6 appears to be the major site even if Ser-7 may be also O-glycosylated. Also sialylated glycans present which contribute to chemokine binding. Thr-16 and Ser-17 may also be glycosylated and, if so, with small moieties such as a T-antigen.

The protein resides in the cell membrane. In terms of biological role, receptor for a number of inflammatory CC-chemokines including CCL3/MIP-1-alpha, CCL4/MIP-1-beta and RANTES and subsequently transduces a signal by increasing the intracellular calcium ion level. May play a role in the control of granulocytic lineage proliferation or differentiation. Participates in T-lymphocyte migration to the infection site by acting as a chemotactic receptor. The protein is C-C chemokine receptor type 5 (CCR5) of Cercopithecus cephus (Moustached monkey).